The primary structure comprises 842 residues: Axin-1 (842 aa).

The tract at residues 1–75 (MSVKGKGFPL…LDLGYEPEGS (75 aa)) is disordered. The span at 34 to 46 (TTDQRPFSHTYYS) shows a compositional bias: polar residues. In terms of domain architecture, RGS spans 88 to 211 (SLHSLLDDQD…LKSDIYLEYT (124 aa)). Disordered regions lie at residues 218–242 (PKNYSDQSSGSGTGKGPSGYLPTLN), 277–297 (SHCAGSNRRLSDGREFRPGTW), 316–344 (TSANDSEQQSMSSDADTMSLTDSSVDGIP), 414–451 (KRVRAEEEGDDGDVSSGPSVISHKLPSGPPMHHFNSRY), 482–532 (KTPG…AKVD), 543–562 (YHHVHHHGGVKPKEQIDGES), 615–637 (KKADLGKSESASHEMPVVPEDSE), 656–675 (HKKSNHSSSSAKKQPPTELA), and 729–754 (RLEEEEKKAAKMPQKQRLKPQKKNVS). The segment covering 316–339 (TSANDSEQQSMSSDADTMSLTDSS) has biased composition (polar residues). The interval 348–433 (LRKHYRREMQ…DGDVSSGPSV (86 aa)) is interaction with GSK3B. An interaction with beta-catenin region spans residues 434–508 (ISHKLPSGPP…RSPDGHLSKT (75 aa)). Residues 543–552 (YHHVHHHGGV) show a composition bias toward basic residues. Positions 615–626 (KKADLGKSESAS) are enriched in basic and acidic residues. The region spanning 760–842 (CDNIVVAYYF…KIIGQVEKID (83 aa)) is the DIX domain.

As to quaternary structure, homodimer. Interacts with hwa; leading to promote the tankyrase-mediated degradation of axin1. In terms of processing, ADP-ribosylated by tankyrase tnks and tnks2. Poly-ADP-ribosylated protein is recognized by rnf146, followed by ubiquitination at 'Lys-48' and subsequent activation of the Wnt signaling pathway. Post-translationally, ubiquitinated by rnf146 when poly-ADP-ribosylated, leading to its degradation and subsequent activation of the Wnt signaling pathway.

It is found in the cytoplasm. It localises to the nucleus. Its subcellular location is the membrane. The protein localises to the cell membrane. Its function is as follows. Component of the beta-catenin destruction complex required for regulating ctnnb1 levels through phosphorylation and ubiquitination, and modulating Wnt-signaling. Controls dorsoventral patterning via two opposing effects; down-regulates ctnnb1 to inhibit the Wnt signaling pathway and ventralize embryos, but also dorsalizes embryos by activating a Wnt-independent JNK signaling pathway. This is Axin-1 (axin1) from Xenopus laevis (African clawed frog).